The chain runs to 459 residues: Exodeoxyribonuclease 7 large subunit (459 aa).

The protein belongs to the XseA family. As to quaternary structure, heterooligomer composed of large and small subunits.

It is found in the cytoplasm. It carries out the reaction Exonucleolytic cleavage in either 5'- to 3'- or 3'- to 5'-direction to yield nucleoside 5'-phosphates.. In terms of biological role, bidirectionally degrades single-stranded DNA into large acid-insoluble oligonucleotides, which are then degraded further into small acid-soluble oligonucleotides. This is Exodeoxyribonuclease 7 large subunit from Pseudomonas aeruginosa (strain UCBPP-PA14).